The primary structure comprises 841 residues: Protein translocase subunit SecA (841 aa).

ATP-binding positions include Q85, 103–107, and D492; that span reads GEGKT. Residues 786-812 form a disordered region; the sequence is REEVVQGQTTAHQPQDGDEAKQAKKAP. Residues C825, C827, C836, and C837 each contribute to the Zn(2+) site.

Belongs to the SecA family. Monomer and homodimer. Part of the essential Sec protein translocation apparatus which comprises SecA, SecYEG and auxiliary proteins SecDF. Other proteins may also be involved. Zn(2+) is required as a cofactor.

It is found in the cell membrane. The protein localises to the cytoplasm. It carries out the reaction ATP + H2O + cellular proteinSide 1 = ADP + phosphate + cellular proteinSide 2.. Part of the Sec protein translocase complex. Interacts with the SecYEG preprotein conducting channel. Has a central role in coupling the hydrolysis of ATP to the transfer of proteins into and across the cell membrane, serving as an ATP-driven molecular motor driving the stepwise translocation of polypeptide chains across the membrane. The sequence is that of Protein translocase subunit SecA from Bacillus velezensis (strain DSM 23117 / BGSC 10A6 / LMG 26770 / FZB42) (Bacillus amyloliquefaciens subsp. plantarum).